The primary structure comprises 193 residues: uncharacterized protein (193 aa).

Residues 153-170 traverse the membrane as a helical segment; that stretch reads WRYWAVIALIAAVLIYLY.

The protein resides in the membrane. This is an uncharacterized protein from Invertebrate iridescent virus 6 (IIV-6).